Here is a 139-residue protein sequence, read N- to C-terminus: MSRRTARKQAFFILYQSDVTGSPAEPLIGRWRAYRGELEDYAERVVRGVERERERLDAVLDGVSEGWPVWRMSAVDRTILRLALYEMLHVQDVPPEVAVNEAVELAKGFSGEEAPSFVGGVLRGAEDKIFGKVGDGEPG.

This sequence belongs to the NusB family.

Functionally, involved in transcription antitermination. Required for transcription of ribosomal RNA (rRNA) genes. Binds specifically to the boxA antiterminator sequence of the ribosomal RNA (rrn) operons. The polypeptide is Transcription antitermination protein NusB (Rubrobacter xylanophilus (strain DSM 9941 / JCM 11954 / NBRC 16129 / PRD-1)).